The sequence spans 355 residues: Guanine nucleotide-binding protein G(i) subunit alpha-2 (355 aa).

The N-myristoyl glycine moiety is linked to residue Gly2. The S-palmitoyl cysteine moiety is linked to residue Cys3. A G-alpha domain is found at 32–355; that stretch reads REVKLLLLGA…KNNLKDCGLF (324 aa). Positions 35 to 48 are G1 motif; sequence KLLLLGAGESGKST. Residues 40–47, 176–182, 201–205, 270–273, and Ala327 contribute to the GTP site; these read GAGESGKS, LRTRVKT, DVGGQ, and NKKD. Ser47 contacts Mg(2+). The segment at 174–182 is G2 motif; the sequence is DVLRTRVKT. At Arg179 the chain carries ADP-ribosylarginine; by cholera toxin. Thr182 contacts Mg(2+). The segment at 197–206 is G3 motif; the sequence is FKMFDVGGQR. Position 205 is a deamidated glutamine; by Photorhabdus PAU_02230 (Gln205). The interval 266-273 is G4 motif; it reads ILFLNKKD. Residues 325 to 330 are G5 motif; it reads TCATDT. An ADP-ribosylcysteine; by pertussis toxin modification is found at Cys352.

The protein belongs to the G-alpha family. G(i/o/t/z) subfamily. In terms of assembly, g proteins are composed of 3 units; alpha, beta and gamma. The alpha chain contains the guanine nucleotide binding site. In this context, interacts with GNB2. Interacts with GPSM1. Interacts with RGS12 and RGS14. Interacts with UNC5B. Interacts (inactive GDP-bound form) with NUCB1 (via GBA motif); the interaction leads to activation of GNAI3. Interacts (inactive GDP-bound form) with CCDC88C/DAPLE (via GBA motif). Interacts (inactive GDP-bound form) with CCDC8A/GIV (via GBA motif). Interacts with CXCR1 and CXCR2. (Microbial infection) Deamidated at Gln-205 by Photorhabdus asymbiotica toxin PAU_02230, blocking GTP hydrolysis of heterotrimeric GNAQ or GNA11 and G-alphai (GNAI1, GNAI2 or GNAI3) proteins, thereby activating RhoA.

The protein localises to the cytoplasm. It is found in the cytoskeleton. The protein resides in the microtubule organizing center. It localises to the centrosome. Its subcellular location is the cell membrane. The protein localises to the membrane. Guanine nucleotide-binding proteins (G proteins) are involved as modulators or transducers in various transmembrane signaling systems. The G(i) proteins are involved in hormonal regulation of adenylate cyclase: they inhibit the cyclase in response to beta-adrenergic stimuli. May play a role in cell division. Functionally, regulates the cell surface density of dopamine receptors DRD2 by sequestrating them as an intracellular pool. This is Guanine nucleotide-binding protein G(i) subunit alpha-2 (GNAI2) from Homo sapiens (Human).